Here is a 401-residue protein sequence, read N- to C-terminus: MTDFQFSKVEDAIEAIRQGKIILVTDDEDRENEGDFICAAEFATPENINFMATYGKGLICTPISTEIAKKLNFHPMVAVNQDNHETAFTVSVDHIDTGTGISAFERSITAMKIVDDNAKATDFRRPGHMFPLIAKEGGVLVRNGHTEATVDLARLAGLKHAGLCCEIMADDGTMMTMPDLQKFAVEHNMPFITIQQLQEYRRKHDSLVKQISVVKMPTKYGEFMAHSFVEVISGKEHVALVKGDLTDGEQVLARIHSECLTGDAFGSQRCDCGQQFAAAMTQIEQEGRGVILYLRQEGRGIGLINKLRAYELQDKGMDTVEANVALGFKEDEREYYIGAQMFQQLGVKSIRLLTNNPAKIEGLKEQGLNIVAREPIIVEPNKNDIDYLKVKQIKMGHMFNF.

A DHBP synthase region spans residues 1–203 (MTDFQFSKVE…IQQLQEYRRK (203 aa)). Residues 30-31 (RE), D35, 142-146 (RNGHT), and E166 contribute to the D-ribulose 5-phosphate site. E31 provides a ligand contact to Mg(2+). Mg(2+) is bound at residue H145. The tract at residues 204-401 (HDSLVKQISV…QIKMGHMFNF (198 aa)) is GTP cyclohydrolase II. 254-258 (RIHSE) is a binding site for GTP. Positions 259, 270, and 272 each coordinate Zn(2+). GTP-binding positions include Q275, 297–299 (EGR), and T319. The active-site Proton acceptor; for GTP cyclohydrolase activity is D331. R333 (nucleophile; for GTP cyclohydrolase activity) is an active-site residue. GTP contacts are provided by T354 and K359.

In the N-terminal section; belongs to the DHBP synthase family. This sequence in the C-terminal section; belongs to the GTP cyclohydrolase II family. Mg(2+) is required as a cofactor. Mn(2+) serves as cofactor. The cofactor is Zn(2+).

It catalyses the reaction D-ribulose 5-phosphate = (2S)-2-hydroxy-3-oxobutyl phosphate + formate + H(+). The catalysed reaction is GTP + 4 H2O = 2,5-diamino-6-hydroxy-4-(5-phosphoribosylamino)-pyrimidine + formate + 2 phosphate + 3 H(+). The protein operates within cofactor biosynthesis; riboflavin biosynthesis; 2-hydroxy-3-oxobutyl phosphate from D-ribulose 5-phosphate: step 1/1. It participates in cofactor biosynthesis; riboflavin biosynthesis; 5-amino-6-(D-ribitylamino)uracil from GTP: step 1/4. Its function is as follows. Catalyzes the conversion of D-ribulose 5-phosphate to formate and 3,4-dihydroxy-2-butanone 4-phosphate. Catalyzes the conversion of GTP to 2,5-diamino-6-ribosylamino-4(3H)-pyrimidinone 5'-phosphate (DARP), formate and pyrophosphate. The protein is Riboflavin biosynthesis protein RibBA of Actinobacillus pleuropneumoniae serotype 5b (strain L20).